We begin with the raw amino-acid sequence, 179 residues long: Putative manganese efflux pump MntP (179 aa).

Helical transmembrane passes span Val4–Ile24, Leu39–Leu59, Ile69–Glu89, Ile102–His122, Ile128–Tyr148, and Ser159–Phe179.

Belongs to the MntP (TC 9.B.29) family.

It is found in the cell inner membrane. Functionally, probably functions as a manganese efflux pump. This is Putative manganese efflux pump MntP from Aliarcobacter butzleri (strain RM4018) (Arcobacter butzleri).